We begin with the raw amino-acid sequence, 1333 residues long: Xanthine dehydrogenase/oxidase (1333 aa).

A 2Fe-2S ferredoxin-type domain is found at 4 to 91; the sequence is DKLVFFVNGR…HVAVTTVEGI (88 aa). Cysteine 43, cysteine 48, cysteine 51, cysteine 73, cysteine 113, cysteine 116, cysteine 148, and cysteine 150 together coordinate [2Fe-2S] cluster. An FAD-binding PCMH-type domain is found at 229 to 414; sequence FEGERVTWIQ…LSIEIPYSRE (186 aa). Residues 257–264, phenylalanine 337, 347–351, aspartate 360, leucine 404, and lysine 422 each bind FAD; these read LVVGNTEI and SVGGN. Cystine bridges form between cysteine 509/cysteine 1318 and cysteine 536/cysteine 993. 2 residues coordinate Mo-molybdopterin: glutamine 768 and phenylalanine 799. Positions 803 and 881 each coordinate substrate. Position 913 (arginine 913) interacts with Mo-molybdopterin. The substrate site is built by phenylalanine 915 and threonine 1011. Alanine 1080 serves as a coordination point for Mo-molybdopterin. The active-site Proton acceptor is the glutamate 1262.

This sequence belongs to the xanthine dehydrogenase family. As to quaternary structure, homodimer. Interacts with BTN1A1. The cofactor is [2Fe-2S] cluster. FAD serves as cofactor. It depends on Mo-molybdopterin as a cofactor. In terms of processing, subject to partial proteolysis; this alters the enzyme from the dehydrogenase form (D) to the oxidase form (O). Post-translationally, contains sulfhydryl groups that are easily oxidized (in vitro); this alters the enzyme from the dehydrogenase form (D) to the oxidase form (O). Detected in milk (at protein level).

The protein localises to the cytoplasm. The protein resides in the peroxisome. Its subcellular location is the secreted. It carries out the reaction xanthine + NAD(+) + H2O = urate + NADH + H(+). The enzyme catalyses hypoxanthine + NAD(+) + H2O = xanthine + NADH + H(+). It catalyses the reaction xanthine + O2 + H2O = urate + H2O2. Can be converted from the dehydrogenase form (D) to the oxidase form (O) irreversibly by proteolysis or reversibly through the oxidation of sulfhydryl groups. Key enzyme in purine degradation. Catalyzes the oxidation of hypoxanthine to xanthine. Catalyzes the oxidation of xanthine to uric acid. Contributes to the generation of reactive oxygen species. Has also low oxidase activity towards aldehydes (in vitro). The protein is Xanthine dehydrogenase/oxidase (XDH) of Homo sapiens (Human).